Consider the following 637-residue polypeptide: Extracellular metalloproteinase 2 (637 aa).

The N-terminal stretch at 1-20 (MRSFLLASLASVATLKSAQA) is a signal peptide. The propeptide occupies 21 to 244 (HPAHSTRGLS…VHAVVDYSAD (224 aa)). Residues asparagine 302, asparagine 328, asparagine 337, and asparagine 413 are each glycosylated (N-linked (GlcNAc...) asparagine). Residue histidine 430 participates in Zn(2+) binding. Glutamate 431 is an active-site residue. Histidine 434 is a binding site for Zn(2+).

Belongs to the peptidase M36 family. Zn(2+) is required as a cofactor.

The protein localises to the secreted. Functionally, secreted metalloproteinase that allows assimilation of proteinaceous substrates. In Phaeosphaeria nodorum (strain SN15 / ATCC MYA-4574 / FGSC 10173) (Glume blotch fungus), this protein is Extracellular metalloproteinase 2 (MEP2).